Reading from the N-terminus, the 129-residue chain is Lysozyme C (129 aa).

The region spanning 1–129 is the C-type lysozyme domain; the sequence is KVFSKCELAH…LSEYLASCNL (129 aa). Cystine bridges form between cysteine 6–cysteine 127, cysteine 30–cysteine 115, cysteine 65–cysteine 80, and cysteine 76–cysteine 94. Residues glutamate 35 and aspartate 53 contribute to the active site. 5 residues coordinate Ca(2+): lysine 82, aspartate 85, asparagine 87, aspartate 90, and aspartate 91.

Belongs to the glycosyl hydrolase 22 family. As to quaternary structure, monomer. Ca(2+) is required as a cofactor.

It carries out the reaction Hydrolysis of (1-&gt;4)-beta-linkages between N-acetylmuramic acid and N-acetyl-D-glucosamine residues in a peptidoglycan and between N-acetyl-D-glucosamine residues in chitodextrins.. Functionally, lysozymes have primarily a bacteriolytic function; those in tissues and body fluids are associated with the monocyte-macrophage system and enhance the activity of immunoagents. The polypeptide is Lysozyme C (LYZ) (Equus asinus (Donkey)).